The sequence spans 216 residues: Ribosome maturation factor RimP (216 aa).

This sequence belongs to the RimP family.

The protein resides in the cytoplasm. Its function is as follows. Required for maturation of 30S ribosomal subunits. The polypeptide is Ribosome maturation factor RimP (Bartonella quintana (strain Toulouse) (Rochalimaea quintana)).